The chain runs to 118 residues: Beta-2-microglobulin (118 aa).

Residues 1-20 form the signal peptide; sequence MAPLVALVLLGLLSLSGLDA. One can recognise an Ig-like C1-type domain in the interval 25 to 112; the sequence is PKVQVYSRHP…HVTLDKPKIV (88 aa). The cysteines at positions 45 and 99 are disulfide-linked.

It belongs to the beta-2-microglobulin family. Heterodimer of an alpha chain and a beta chain. Beta-2-microglobulin is the beta-chain of major histocompatibility complex class I molecules.

The protein localises to the secreted. Its function is as follows. Component of the class I major histocompatibility complex (MHC). Involved in the presentation of peptide antigens to the immune system. The sequence is that of Beta-2-microglobulin (B2M) from Sus scrofa (Pig).